A 240-amino-acid polypeptide reads, in one-letter code: Endonuclease NucS 1 (240 aa).

The protein belongs to the NucS endonuclease family.

It is found in the cytoplasm. Its function is as follows. Cleaves both 3' and 5' ssDNA extremities of branched DNA structures. The polypeptide is Endonuclease NucS 1 (Halobacterium salinarum (strain ATCC 700922 / JCM 11081 / NRC-1) (Halobacterium halobium)).